Reading from the N-terminus, the 2207-residue chain is DNA polymerase epsilon catalytic subunit A (2207 aa).

Disordered regions lie at residues 1 to 20 (MPSR…AASF), 1201 to 1233 (SMEK…PFAS), and 1934 to 1961 (RPES…ENEE). C2075, C2078, C2113, and C2116 together coordinate Zn(2+). The CysA-type zinc-finger motif lies at 2075 to 2116 (CSACCLIRDLDLCRDEDVLPERGSGSGPDSATSSRPWCCPFC). Residues C2147, C2150, C2162, and C2164 each coordinate [4Fe-4S] cluster. Residues 2147-2164 (CSKCGTLKISEFMEHCSC) carry the CysB motif motif.

This sequence belongs to the DNA polymerase type-B family. In terms of assembly, heterotetramer. Consists of 4 subunits: pol2, dpb2, dpb3 and dpb4. [4Fe-4S] cluster is required as a cofactor.

Its subcellular location is the nucleus. The enzyme catalyses DNA(n) + a 2'-deoxyribonucleoside 5'-triphosphate = DNA(n+1) + diphosphate. DNA polymerase II participates in chromosomal DNA replication. This chain is DNA polymerase epsilon catalytic subunit A (pol2), found in Emericella nidulans (strain FGSC A4 / ATCC 38163 / CBS 112.46 / NRRL 194 / M139) (Aspergillus nidulans).